The following is a 416-amino-acid chain: MAQGFKVRDLSLAGEGRMQIEWAERHMPVLMRLRSSMGGDKPLSGVRVAACLHVTKETAVLVETLRKWGAEVYLAPSNPLSTQDEVAAALAEAGIGVFAWRGMTPEEYKWALSTVAGREPDIVIDDGADLHVLLHEEMRSVGEKVWGGTEETTTGVIRLRALEREGRLLYPVIAVNDALTKFMFDNRYGTGQSTVDGVLRATNILIAGKTVVVAGYGWVGRGIAARFRGMGAKVVVTEVDPVRALEAAMDGFTVTTMDEAASLGDVFITATGNINVIDARHMEKMKDGAILANAGHFNVEINVAALEEMSVSKRRVRRYLDEYRLPDGRRLYLIGEGRLVNLVAAEGHPSEVMDMSFSNQALAVLKIAGERGRLEKRVHRVERIQDEMVARLKLETMGVRIDSLTEEQKLYLQKWK.

3 residues coordinate substrate: threonine 55, aspartate 126, and glutamate 151. 152–154 lines the NAD(+) pocket; it reads TTT. The substrate site is built by lysine 181 and aspartate 185. NAD(+)-binding positions include asparagine 186, 215 to 220, glutamate 238, asparagine 273, 294 to 296, and asparagine 341; these read GYGWVG and AGH.

This sequence belongs to the adenosylhomocysteinase family. The cofactor is NAD(+).

The protein localises to the cytoplasm. The enzyme catalyses S-adenosyl-L-homocysteine + H2O = L-homocysteine + adenosine. Its pathway is amino-acid biosynthesis; L-homocysteine biosynthesis; L-homocysteine from S-adenosyl-L-homocysteine: step 1/1. Its function is as follows. May play a key role in the regulation of the intracellular concentration of adenosylhomocysteine. This is Adenosylhomocysteinase from Aeropyrum pernix (strain ATCC 700893 / DSM 11879 / JCM 9820 / NBRC 100138 / K1).